The sequence spans 131 residues: Sirohydrochlorin cobaltochelatase (131 aa).

His12 serves as the catalytic Proton acceptor. Residues His12 and His78 each contribute to the Co(2+) site. Ni(2+) is bound by residues His12 and His78. Substrate is bound at residue 73–78 (LASGVH).

It belongs to the CbiX family. CbiXS subfamily. In terms of assembly, homotetramer; dimer of dimers.

It catalyses the reaction Co-sirohydrochlorin + 2 H(+) = sirohydrochlorin + Co(2+). The catalysed reaction is Ni-sirohydrochlorin + 2 H(+) = sirohydrochlorin + Ni(2+). Its pathway is cofactor biosynthesis; adenosylcobalamin biosynthesis; cob(II)yrinate a,c-diamide from sirohydrochlorin (anaerobic route): step 1/10. Its function is as follows. Catalyzes the insertion of Co(2+) into sirohydrochlorin as part of the anaerobic pathway to cobalamin biosynthesis. Involved in the biosynthesis of the unique nickel-containing tetrapyrrole coenzyme F430, the prosthetic group of methyl-coenzyme M reductase (MCR), which plays a key role in methanogenesis and anaerobic methane oxidation. Catalyzes the insertion of Ni(2+) into sirohydrochlorin to yield Ni-sirohydrochlorin. The protein is Sirohydrochlorin cobaltochelatase of Methanococcoides burtonii (strain DSM 6242 / NBRC 107633 / OCM 468 / ACE-M).